We begin with the raw amino-acid sequence, 355 residues long: Serine acetyltransferase 4 (355 aa).

It belongs to the transferase hexapeptide repeat family. Homomultimer. Localized in vascular tissues, particularly in phloem.

The protein localises to the cytoplasm. It catalyses the reaction L-serine + acetyl-CoA = O-acetyl-L-serine + CoA. It functions in the pathway amino-acid biosynthesis; L-cysteine biosynthesis; L-cysteine from L-serine: step 1/2. With respect to regulation, feedback inhibitions by L-Ser and acetyl-CoA. This is Serine acetyltransferase 4 from Arabidopsis thaliana (Mouse-ear cress).